The sequence spans 335 residues: UPF0353 protein Mjls_2492 (335 aa).

2 helical membrane passes run 18–38 and 67–87; these read WFFL…IVAL and LPAI…AGPT. The 197-residue stretch at 98-294 folds into the VWFA domain; that stretch reads VVMLVIDVSQ…EQLREVYANL (197 aa). The helical transmembrane segment at 309–329 threads the bilayer; it reads VGWLRLGALVLALSALAALLL.

The protein belongs to the UPF0353 family.

Its subcellular location is the cell membrane. The sequence is that of UPF0353 protein Mjls_2492 from Mycobacterium sp. (strain JLS).